The sequence spans 353 residues: Photosystem II protein D1 (353 aa).

Thr2 bears the N-acetylthreonine mark. At Thr2 the chain carries Phosphothreonine. 3 helical membrane passes run 29–46 (YIGWFGVLMIPTLLTATS), 118–133 (HFLLGVACYMGREWEL), and 142–156 (WIAVAYSAPVAAATA). Position 118 (His118) interacts with chlorophyll a. Tyr126 is a binding site for pheophytin a. 2 residues coordinate [CaMn4O5] cluster: Asp170 and Glu189. The chain crosses the membrane as a helical span at residues 197–218 (FHMLGVAGVFGGSLFSAMHGSL). Residue His198 participates in chlorophyll a binding. A quinone contacts are provided by residues His215 and 264–265 (SF). His215 is a binding site for Fe cation. A Fe cation-binding site is contributed by His272. Residues 274 to 288 (FLAAWPVVGIWFTAL) form a helical membrane-spanning segment. Residues His332, Glu333, Asp342, and Ala344 each coordinate [CaMn4O5] cluster. The propeptide occupies 345 to 353 (AVEAPSTNG).

The protein belongs to the reaction center PufL/M/PsbA/D family. PSII is composed of 1 copy each of membrane proteins PsbA, PsbB, PsbC, PsbD, PsbE, PsbF, PsbH, PsbI, PsbJ, PsbK, PsbL, PsbM, PsbT, PsbX, PsbY, PsbZ, Psb30/Ycf12, at least 3 peripheral proteins of the oxygen-evolving complex and a large number of cofactors. It forms dimeric complexes. It depends on The D1/D2 heterodimer binds P680, chlorophylls that are the primary electron donor of PSII, and subsequent electron acceptors. It shares a non-heme iron and each subunit binds pheophytin, quinone, additional chlorophylls, carotenoids and lipids. D1 provides most of the ligands for the Mn4-Ca-O5 cluster of the oxygen-evolving complex (OEC). There is also a Cl(-1) ion associated with D1 and D2, which is required for oxygen evolution. The PSII complex binds additional chlorophylls, carotenoids and specific lipids. as a cofactor. Post-translationally, tyr-161 forms a radical intermediate that is referred to as redox-active TyrZ, YZ or Y-Z. C-terminally processed by CTPA; processing is essential to allow assembly of the oxygen-evolving complex and thus photosynthetic growth.

Its subcellular location is the plastid. The protein resides in the chloroplast thylakoid membrane. The catalysed reaction is 2 a plastoquinone + 4 hnu + 2 H2O = 2 a plastoquinol + O2. In terms of biological role, photosystem II (PSII) is a light-driven water:plastoquinone oxidoreductase that uses light energy to abstract electrons from H(2)O, generating O(2) and a proton gradient subsequently used for ATP formation. It consists of a core antenna complex that captures photons, and an electron transfer chain that converts photonic excitation into a charge separation. The D1/D2 (PsbA/PsbD) reaction center heterodimer binds P680, the primary electron donor of PSII as well as several subsequent electron acceptors. This chain is Photosystem II protein D1, found in Lepidium virginicum (Virginia pepperweed).